The following is a 317-amino-acid chain: Aspartate carbamoyltransferase catalytic subunit (317 aa).

Residues Arg64 and Thr65 each coordinate carbamoyl phosphate. Lys92 lines the L-aspartate pocket. The carbamoyl phosphate site is built by Arg114, His142, and Gln145. Residues Arg176 and Arg230 each coordinate L-aspartate. The carbamoyl phosphate site is built by Gly271 and Pro272.

The protein belongs to the aspartate/ornithine carbamoyltransferase superfamily. ATCase family. Heterododecamer (2C3:3R2) of six catalytic PyrB chains organized as two trimers (C3), and six regulatory PyrI chains organized as three dimers (R2).

It carries out the reaction carbamoyl phosphate + L-aspartate = N-carbamoyl-L-aspartate + phosphate + H(+). It functions in the pathway pyrimidine metabolism; UMP biosynthesis via de novo pathway; (S)-dihydroorotate from bicarbonate: step 2/3. Catalyzes the condensation of carbamoyl phosphate and aspartate to form carbamoyl aspartate and inorganic phosphate, the committed step in the de novo pyrimidine nucleotide biosynthesis pathway. In Nitratidesulfovibrio vulgaris (strain ATCC 29579 / DSM 644 / CCUG 34227 / NCIMB 8303 / VKM B-1760 / Hildenborough) (Desulfovibrio vulgaris), this protein is Aspartate carbamoyltransferase catalytic subunit.